The sequence spans 768 residues: uncharacterized protein (768 aa).

This sequence to E.coli YkiA.

This is an uncharacterized protein from Escherichia coli (strain K12).